The chain runs to 779 residues: Phosphatidylinositol 4-phosphate 5-kinase 4 (779 aa).

The disordered stretch occupies residues 20-61; the sequence is QQAKKRANSIFGTVSVAPQTDDDATTTTEENDDETSTNRSSI. A compositionally biased stretch (acidic residues) spans 39-54; sequence TDDDATTTTEENDDET. MORN repeat units follow at residues 77-99, 100-122, 123-145, 146-168, 169-191, 192-214, 215-237, and 238-259; these read YTGQ…DGCM, YIGD…SGAT, YEGE…SGDT, YKGQ…NGDV, YDGE…DGSY, YMGE…DGNR, YDGF…DGSF, and YVGH…SGDD. Positions 382–775 constitute a PIPK domain; sequence TISKGHRNYE…RFRDFIFKVF (394 aa). An activation loop region spans residues 735-756; the sequence is YDISKKLEHAYKSIQYDPTSIS.

It catalyses the reaction a 1,2-diacyl-sn-glycero-3-phospho-(1D-myo-inositol 4-phosphate) + ATP = a 1,2-diacyl-sn-glycero-3-phospho-(1D-myo-inositol-4,5-bisphosphate) + ADP + H(+). This chain is Phosphatidylinositol 4-phosphate 5-kinase 4 (PIP5K4), found in Arabidopsis thaliana (Mouse-ear cress).